Reading from the N-terminus, the 335-residue chain is Serpentine receptor class alpha-13 (335 aa).

The Extracellular portion of the chain corresponds to Met1 to Tyr25. Residues Ile26–Ala46 traverse the membrane as a helical segment. The Cytoplasmic segment spans residues Ile47–Arg61. A helical membrane pass occupies residues Val62–Lys82. The Extracellular portion of the chain corresponds to Ala83 to Phe108. A helical transmembrane segment spans residues Ile109–Ile129. The Cytoplasmic segment spans residues Asp130–Ser146. The helical transmembrane segment at Ile147–Leu167 threads the bilayer. Residues Thr168–His192 lie on the Extracellular side of the membrane. Residues Ile193–Met213 form a helical membrane-spanning segment. At Tyr214 to Ala243 the chain is on the cytoplasmic side. The chain crosses the membrane as a helical span at residues Ile244 to Leu264. Topologically, residues Leu265–Asn278 are extracellular. The helical transmembrane segment at Leu279–Cys299 threads the bilayer. The Cytoplasmic segment spans residues Lys300–Lys335.

It belongs to the nematode receptor-like protein sra family. Expressed in the AWA and AWC chemosensory neurons.

Its subcellular location is the membrane. Chemosensory receptor that negatively regulates RAS/MAPK signaling during vulva induction and the negative regulation of olfaction of volitile attractants. Required for the suppression of vulval induction in response to food starvation. Signaling acts through the GPA-5 G-alpha protein subunit. The protein is Serpentine receptor class alpha-13 (sra-13) of Caenorhabditis elegans.